The chain runs to 211 residues: Redox-sensing transcriptional repressor Rex (211 aa).

Positions 17 to 56 form a DNA-binding region, H-T-H motif; it reads LYYRFVSILKGKGIDRVNSKTISEALQIDSATIRRDFSYF. 91 to 96 lines the NAD(+) pocket; it reads GIGNLG.

Belongs to the transcriptional regulatory Rex family. In terms of assembly, homodimer.

The protein localises to the cytoplasm. Modulates transcription in response to changes in cellular NADH/NAD(+) redox state. This is Redox-sensing transcriptional repressor Rex from Staphylococcus epidermidis (strain ATCC 35984 / DSM 28319 / BCRC 17069 / CCUG 31568 / BM 3577 / RP62A).